We begin with the raw amino-acid sequence, 206 residues long: Small ribosomal subunit protein uS4 (206 aa).

The S4 RNA-binding domain occupies 96–156; it reads CRLDNVVYRM…EKSLNQLRIV (61 aa).

The protein belongs to the universal ribosomal protein uS4 family. In terms of assembly, part of the 30S ribosomal subunit. Contacts protein S5. The interaction surface between S4 and S5 is involved in control of translational fidelity.

One of the primary rRNA binding proteins, it binds directly to 16S rRNA where it nucleates assembly of the body of the 30S subunit. Functionally, with S5 and S12 plays an important role in translational accuracy. The chain is Small ribosomal subunit protein uS4 from Pseudomonas entomophila (strain L48).